Consider the following 623-residue polypeptide: uncharacterized protein (623 aa).

Residues 157-166 (LNESPLRDQQ) are compositionally biased toward basic and acidic residues. Residues 157 to 237 (LNESPLRDQQ…QGLPDHNNSI (81 aa)) form a disordered region. Residues 167–177 (ESSTPSKNSTL) are compositionally biased toward polar residues. Residues 193 to 210 (AFRPLPSPSRRSSQSAPA) show a composition bias toward low complexity.

This is an uncharacterized protein from Macaca fascicularis (Crab-eating macaque).